The primary structure comprises 425 residues: Serine--tRNA ligase (425 aa).

Residue Thr-231–Glu-233 coordinates L-serine. Residue Arg-262 to Glu-264 coordinates ATP. Glu-285 contributes to the L-serine binding site. Glu-349–Ser-352 serves as a coordination point for ATP. Ser-385 contacts L-serine.

Belongs to the class-II aminoacyl-tRNA synthetase family. Type-1 seryl-tRNA synthetase subfamily. As to quaternary structure, homodimer. The tRNA molecule binds across the dimer.

The protein resides in the cytoplasm. It catalyses the reaction tRNA(Ser) + L-serine + ATP = L-seryl-tRNA(Ser) + AMP + diphosphate + H(+). The catalysed reaction is tRNA(Sec) + L-serine + ATP = L-seryl-tRNA(Sec) + AMP + diphosphate + H(+). It participates in aminoacyl-tRNA biosynthesis; selenocysteinyl-tRNA(Sec) biosynthesis; L-seryl-tRNA(Sec) from L-serine and tRNA(Sec): step 1/1. Its function is as follows. Catalyzes the attachment of serine to tRNA(Ser). Is also able to aminoacylate tRNA(Sec) with serine, to form the misacylated tRNA L-seryl-tRNA(Sec), which will be further converted into selenocysteinyl-tRNA(Sec). This chain is Serine--tRNA ligase, found in Bacillus subtilis (strain 168).